A 1059-amino-acid chain; its full sequence is Isoleucine--tRNA ligase (1059 aa).

Positions Pro-59–His-69 match the 'HIGH' region motif. The 'KMSKS' region motif lies at Lys-637–Ser-641. Position 640 (Lys-640) interacts with ATP.

This sequence belongs to the class-I aminoacyl-tRNA synthetase family. IleS type 2 subfamily. Monomer. Requires Zn(2+) as cofactor.

Its subcellular location is the cytoplasm. The catalysed reaction is tRNA(Ile) + L-isoleucine + ATP = L-isoleucyl-tRNA(Ile) + AMP + diphosphate. Functionally, catalyzes the attachment of isoleucine to tRNA(Ile). As IleRS can inadvertently accommodate and process structurally similar amino acids such as valine, to avoid such errors it has two additional distinct tRNA(Ile)-dependent editing activities. One activity is designated as 'pretransfer' editing and involves the hydrolysis of activated Val-AMP. The other activity is designated 'posttransfer' editing and involves deacylation of mischarged Val-tRNA(Ile). This chain is Isoleucine--tRNA ligase, found in Mycobacterium leprae (strain TN).